We begin with the raw amino-acid sequence, 350 residues long: Biotin synthase (350 aa).

The region spanning 38–262 (RQVQVSTLLS…MMPTSYVRLS (225 aa)) is the Radical SAM core domain. The [4Fe-4S] cluster site is built by cysteine 53, cysteine 57, and cysteine 60. [2Fe-2S] cluster contacts are provided by cysteine 97, cysteine 128, cysteine 188, and arginine 260.

The protein belongs to the radical SAM superfamily. Biotin synthase family. Homodimer. [4Fe-4S] cluster is required as a cofactor. The cofactor is [2Fe-2S] cluster.

It catalyses the reaction (4R,5S)-dethiobiotin + (sulfur carrier)-SH + 2 reduced [2Fe-2S]-[ferredoxin] + 2 S-adenosyl-L-methionine = (sulfur carrier)-H + biotin + 2 5'-deoxyadenosine + 2 L-methionine + 2 oxidized [2Fe-2S]-[ferredoxin]. It functions in the pathway cofactor biosynthesis; biotin biosynthesis; biotin from 7,8-diaminononanoate: step 2/2. Catalyzes the conversion of dethiobiotin (DTB) to biotin by the insertion of a sulfur atom into dethiobiotin via a radical-based mechanism. This chain is Biotin synthase, found in Yersinia enterocolitica serotype O:8 / biotype 1B (strain NCTC 13174 / 8081).